The following is a 102-amino-acid chain: Small ribosomal subunit protein uS10 (102 aa).

This sequence belongs to the universal ribosomal protein uS10 family. Part of the 30S ribosomal subunit.

In terms of biological role, involved in the binding of tRNA to the ribosomes. This chain is Small ribosomal subunit protein uS10, found in Sulfurihydrogenibium sp. (strain YO3AOP1).